The primary structure comprises 349 residues: N-acetyltaurine hydrolase (349 aa).

A divalent metal cation is bound by residues His26, His28, Glu169, His201, His230, and Asp298.

This sequence belongs to the metallo-dependent hydrolases superfamily. Phosphotriesterase family. Requires a divalent metal cation as cofactor.

It is found in the cytoplasm. The protein localises to the cytosol. The catalysed reaction is N-acetyltaurine + H2O = taurine + acetate. The enzyme catalyses N-propanoyltaurine + H2O = propanoate + taurine. It catalyses the reaction N-acetyl-L-methionine + H2O = L-methionine + acetate. It carries out the reaction N-acetyl-L-isoleucine + H2O = L-isoleucine + acetate. The catalysed reaction is N-acetyl-L-leucine + H2O = L-leucine + acetate. The enzyme catalyses N-acetyl-L-valine + H2O = L-valine + acetate. Its function is as follows. N-acetyltaurine hydrolase that catalyzes the hydrolysis of N-acetyltaurine into taurine and acetate. PTER also acts on other N-acetyl amino acids (Met, Ile, Leu, Val) and N-propionyltaurine, but at lower rates. The polypeptide is N-acetyltaurine hydrolase (pter) (Tetraodon nigroviridis (Spotted green pufferfish)).